A 547-amino-acid polypeptide reads, in one-letter code: Serine/threonine-protein kinase RIO2 (547 aa).

The region spanning 97-273 is the Protein kinase domain; sequence VGNQMGVGKE…RDVKCIREFF (177 aa). Residue Lys123 coordinates ATP. Catalysis depends on Asp228, which acts as the Proton acceptor. Residues Ser332, Ser337, Ser350, Ser362, Ser385, and Ser390 each carry the phosphoserine modification. The segment at 352–385 is disordered; sequence LEKEADPADESGGSWCCSSTDSKQIKDGGLPEES. Residues 399–408 carry the Nuclear export signal motif; it reads AVEEMERQVL. The tract at residues 404 to 445 is disordered; that stretch reads ERQVLPHRSVTEFSEESRRTENDGQPGQRSPAGSEDCDDEPP. A phosphoserine mark is found at Ser412, Ser417, Ser433, Ser437, and Ser543.

This sequence belongs to the protein kinase superfamily. RIO-type Ser/Thr kinase family. In terms of assembly, associated with late 40S pre-ribosomal particles. Interacts with PLK1 (via its N-terminus). The cofactor is Mg(2+). Autophosphorylated (in vitro). Phosphorylation affects the timing of the metaphase-anaphase transition.

It localises to the cytoplasm. The enzyme catalyses L-seryl-[protein] + ATP = O-phospho-L-seryl-[protein] + ADP + H(+). It catalyses the reaction L-threonyl-[protein] + ATP = O-phospho-L-threonyl-[protein] + ADP + H(+). In terms of biological role, serine/threonine-protein kinase involved in the final steps of cytoplasmic maturation of the 40S ribosomal subunit. Involved in export of the 40S pre-ribosome particles (pre-40S) from the nucleus to the cytoplasm. Its kinase activity is required for the release of NOB1, PNO1 and LTV1 from the late pre-40S and the processing of 18S-E pre-rRNA to the mature 18S rRNA. May regulate the timing of the metaphase-anaphase transition during mitotic progression, and its phosphorylation, may regulate this function. In Mus musculus (Mouse), this protein is Serine/threonine-protein kinase RIO2 (Riok2).